A 156-amino-acid polypeptide reads, in one-letter code: Endoribonuclease YbeY (156 aa).

Zn(2+)-binding residues include His122, His126, and His132.

The protein belongs to the endoribonuclease YbeY family. The cofactor is Zn(2+).

The protein resides in the cytoplasm. Its function is as follows. Single strand-specific metallo-endoribonuclease involved in late-stage 70S ribosome quality control and in maturation of the 3' terminus of the 16S rRNA. The sequence is that of Endoribonuclease YbeY from Bacillus cereus (strain G9842).